A 1225-amino-acid chain; its full sequence is MIVEVELGFLLSTLFFTIISIILFYFFINNKNNLIDQCQEVTKLNNKDNKIVNNNNNNYNNNNFNKIEEINDDKNKEIIKLINNSNNKNLKIKIQEIDSGNNNNNNNNNNNNNNNNLNKNSNEIFRNFKIFSGSLLVIDQDLNIISSSESVRDIFSNINDINGVNQQVIGSLQNYSFINLVHQKDKDRVSTFLKLKFKNNNNIKHQQFSEDIINEKDELKEIQIEDNKELIIINNNNNNNNDNVLKFGNNNSNNSSIILFQGVYHLNNTDLSKPFNLQVSILPFISENYIVLSLKDLSPPPLRLLLNKTSSALSPRSLSSSSSSSPSSSNNNGNTNNSGSLSPRSSNSNGSAVSPRNVSSNSMSPRGQNSDRSISSPRGSSSSSSSSSNELAISPRNSNGTISSPRTSNLSIESVLNNKSIDMISHLSHELRTPIHSVIASIQLFRSTILTVTQNEYLSIIDTSANTLLELVSNVLDYKRIRSGKLTLNNVDFNLCHVIEDVCAMVSPQAQAKSLQIASFIFIHCPLSFYGDPIRLRQVLLNLIGNGLKYTNKGQVCISVEPEQVNEHCMYLHFQVKDSGIGIKEENMSKLFAGFSQVNNGGTTQEALGSGLGLAISKDLVELMGGKIWCSSNATQNNGEAGCTFHFVIPLETNPKQLPCPIQNFNGLSVLVVDKNPYIQTVLCQYLEGWNCQVIKSSDIKEASNKLKDLRREQIEVVMIDIDNIDFRDFIQFKDAFNRLEFGRIGLITMSSDRSMVNEMGFGTSKLTKPFRQSHLVACLLASMPEHSSSTTNCFSNIVGMNSNINNNNNINNNSNNNNNNMQTHNSNSVYGNGNYGNCTPFSNNNNRIHMMSSGDKPSINNRRMSISLGKIPTFNSGGSNSPRSKKLFEEVLQQQQLQQQLQQQLQQQQQLQQQQQQQQQQQQQQQQQLQQQQQQLNTIDDDSNNYCNTTGTMDSIDEINKNNYSDSESDELNDDQAPIIAPVQQLSFGRVTRRHSIDIIMFENSRELSELRNLEDSTRYLSPRSMNNNNGNNDNGINGGSGNSLFGSSIKEEIGGTSDTSSLAQSPNSLSPRAPTKIMILDDNPVSLKLMQRILESRGFECYPFDCSEKAVAQLDQVNPAIIFMDCEMPKMNGFECTQLIRKREQESLCLLKDRKIIIALTAHINPEIQVKCFDAGMNDFISKPFKPQCLELILRKWEDCISNNQLNYNNSLINNQTTIQEQV.

Residues 8–28 (GFLLSTLFFTIISIILFYFFI) traverse the membrane as a helical segment. Low complexity predominate over residues 313-356 (LSPRSLSSSSSSSPSSSNNNGNTNNSGSLSPRSSNSNGSAVSPR). A disordered region spans residues 313-407 (LSPRSLSSSS…SNGTISSPRT (95 aa)). The span at 357–368 (NVSSNSMSPRGQ) shows a compositional bias: polar residues. Positions 370–388 (SDRSISSPRGSSSSSSSSS) are enriched in low complexity. Residues 389-407 (NELAISPRNSNGTISSPRT) show a composition bias toward polar residues. Residues 426–653 (HLSHELRTPI…TFHFVIPLET (228 aa)) enclose the Histidine kinase domain. Position 429 is a phosphohistidine; by autocatalysis (histidine 429). The 116-residue stretch at 669 to 784 (SVLVVDKNPY…HLVACLLASM (116 aa)) folds into the Response regulatory 1 domain. Aspartate 721 carries the 4-aspartylphosphate modification. 3 disordered regions span residues 809-832 (NNIN…SVYG), 941-974 (DDDS…DELN), and 1021-1076 (YLSP…PRAP). Residues 945–954 (NNYCNTTGTM) are compositionally biased toward polar residues. The segment covering 1023–1037 (SPRSMNNNNGNNDNG) has biased composition (low complexity). The span at 1058–1072 (TSDTSSLAQSPNSLS) shows a compositional bias: polar residues. The region spanning 1078-1200 (KIMILDDNPV…CLELILRKWE (123 aa)) is the Response regulatory 2 domain. The residue at position 1127 (aspartate 1127) is a 4-aspartylphosphate.

The protein localises to the membrane. It carries out the reaction ATP + protein L-histidine = ADP + protein N-phospho-L-histidine.. Functionally, acts in a signal transduction pathway that regulates the slug versus culmination choice. Believed to be the first component of a phosphorelay that couples the sensing of ammonia to the modulation of PKA activity and hence activates culmination and spore germination. Ammonium transporters amtA and amtC are thought to respectively activate and inhibit dhkC phosphorelay. This protein probably undergoes an ATP-dependent autophosphorylation at conserved His residue in the kinase core, and a phosphoryl group is then transferred to a conserved aspartate residue in the receiver domain. The sequence is that of Hybrid signal transduction histidine kinase C (dhkC) from Dictyostelium discoideum (Social amoeba).